We begin with the raw amino-acid sequence, 145 residues long: Transcription antitermination protein NusB (145 aa).

It belongs to the NusB family.

Its function is as follows. Involved in transcription antitermination. Required for transcription of ribosomal RNA (rRNA) genes. Binds specifically to the boxA antiterminator sequence of the ribosomal RNA (rrn) operons. The protein is Transcription antitermination protein NusB of Psychromonas ingrahamii (strain DSM 17664 / CCUG 51855 / 37).